A 173-amino-acid chain; its full sequence is Putative phosphoesterase GK0864 (173 aa).

The active-site Proton donor is H34. 2 consecutive short sequence motifs (HXTX) follow at residues 34–37 (HITL) and 115–118 (HITI). Catalysis depends on H115, which acts as the Proton acceptor.

The protein belongs to the 2H phosphoesterase superfamily. YjcG family.

This Geobacillus kaustophilus (strain HTA426) protein is Putative phosphoesterase GK0864.